Reading from the N-terminus, the 105-residue chain is Cuticle protein AM1159 (105 aa).

A Chitin-binding type R&amp;R domain is found at 16–81; that stretch reads DGNFNYNFQT…PESPLLPVGP (66 aa). The segment at 25–46 is disordered; that stretch reads TSNGIEDTKTGTPGSQGQSNMQ.

Arthrodial membrane.

The sequence is that of Cuticle protein AM1159 from Cancer pagurus (Rock crab).